Reading from the N-terminus, the 32-residue chain is MSDIN-like toxin proprotein 1 (32 aa).

The propeptide occupies 1 to 10 (MSDINATCLP). The cyclopeptide (Ala-Pro) cross-link spans 11-17 (AWLALCP). The propeptide occupies 18–32 (CVGDDVNPTLTRGGT).

It belongs to the MSDIN fungal toxin family. In terms of processing, processed by the macrocyclase-peptidase enzyme POPB to yield a toxic cyclic heptapeptide. POPB first removes 10 residues from the N-terminus. Conformational trapping of the remaining peptide forces the enzyme to release this intermediate rather than proceed to macrocyclization. The enzyme rebinds the remaining peptide in a different conformation and catalyzes macrocyclization of the N-terminal 7 residues.

In terms of biological role, probable toxin that belongs to the MSDIN-like toxin family responsible for a large number of food poisoning cases and deaths. The chain is MSDIN-like toxin proprotein 1 from Amanita fuligineoides.